We begin with the raw amino-acid sequence, 256 residues long: MNECIVIKCGGSMLERLDSTFFHCIEKLKRKYRIVIVHGGGPDIDKILKKLQIPIEKKHGLRVTSQEVMEVVQMVLCGSTNKNLVQNFQRYGLPAIGISGCDGKLLQAKPLNKKIGYVGEVSKVESSLLEGVLNLNYIPIIAPIGIGEEQVYNINADIAAAGIAAALRVKELIFITDVDGLLYEGKLVKKTDEIEILDMIEKEIITGGMIPKVQAALVALRMGIQSVSIVNGTKNFIGLTGEWIGTTVTRGRLQYE.

Residues 40–41 (GG), R62, and N153 each bind substrate.

The protein belongs to the acetylglutamate kinase family. ArgB subfamily.

The protein resides in the cytoplasm. The enzyme catalyses N-acetyl-L-glutamate + ATP = N-acetyl-L-glutamyl 5-phosphate + ADP. Its pathway is amino-acid biosynthesis; L-arginine biosynthesis; N(2)-acetyl-L-ornithine from L-glutamate: step 2/4. Catalyzes the ATP-dependent phosphorylation of N-acetyl-L-glutamate. The polypeptide is Acetylglutamate kinase (Bacillus cytotoxicus (strain DSM 22905 / CIP 110041 / 391-98 / NVH 391-98)).